A 294-amino-acid polypeptide reads, in one-letter code: ATP synthase gamma chain (294 aa).

This sequence belongs to the ATPase gamma chain family. In terms of assembly, F-type ATPases have 2 components, CF(1) - the catalytic core - and CF(0) - the membrane proton channel. CF(1) has five subunits: alpha(3), beta(3), gamma(1), delta(1), epsilon(1). CF(0) has three main subunits: a, b and c.

It localises to the cell inner membrane. Produces ATP from ADP in the presence of a proton gradient across the membrane. The gamma chain is believed to be important in regulating ATPase activity and the flow of protons through the CF(0) complex. This Rhizobium rhizogenes (strain K84 / ATCC BAA-868) (Agrobacterium radiobacter) protein is ATP synthase gamma chain.